The chain runs to 414 residues: Esterase FrsA (414 aa).

It belongs to the FrsA family.

The enzyme catalyses a carboxylic ester + H2O = an alcohol + a carboxylate + H(+). Functionally, catalyzes the hydrolysis of esters. This chain is Esterase FrsA, found in Klebsiella pneumoniae (strain 342).